The following is a 153-amino-acid chain: Transcriptional regulator MraZ (153 aa).

SpoVT-AbrB domains lie at 7 to 61 (KEKH…LPDV) and 90 to 133 (LEMV…EPGR).

The protein belongs to the MraZ family. Forms oligomers.

It localises to the cytoplasm. The protein resides in the nucleoid. The chain is Transcriptional regulator MraZ from Chlorobium luteolum (strain DSM 273 / BCRC 81028 / 2530) (Pelodictyon luteolum).